The primary structure comprises 106 residues: Prothymosin alpha-B (106 aa).

Residues 1 to 39 (MADAKVDSATEISAKDLKEKKLIEEKENGKDATNGKENE) show a composition bias toward basic and acidic residues. A disordered region spans residues 1-106 (MADAKVDSAT…DVDPKKQKVN (106 aa)). Ser-8 bears the Phosphoserine mark. Thr-10 carries the phosphothreonine modification. Composition is skewed to acidic residues over residues 40–76 (ENGE…DEDL) and 85–98 (DDDE…EDDV).

Belongs to the pro/parathymosin family. As to expression, uniformly expressed in all embryonic cells at 4 and 8 hpf. At the 20-somite stage (18 hpf), ubiquitously expressed in the developing nervous system, in the tail bud and in the pronephric ducts. Also expressed in some placodes, including the anterior lateral line placode, otic vesicle and olfactory placode. At 27 hpf, strong expression persists in the central nervous system and the olfactory placode. Expressed strongly in the eyes and the pectoral fin buds. In the tail region, expressed in the spinal cord, in the posterior lateral line precursors, and persists in the pronephric ducts. At 48 hpf, expressed in all head territories including the developing brain, eyes, and pharyngeal arches. More caudally, expression persists in the pectoral fin buds, the spinal cord and, for the first time, appears in the intestine. At 72 hpf, expressed only in restricted regions of the brain, in pharyngeal arches region and in the amacrine cells and the horizontal cells of the retina.

The protein localises to the nucleus. The polypeptide is Prothymosin alpha-B (Danio rerio (Zebrafish)).